Here is a 503-residue protein sequence, read N- to C-terminus: Maturase K (503 aa).

This sequence belongs to the intron maturase 2 family. MatK subfamily.

The protein resides in the plastid. Its subcellular location is the chloroplast. Functionally, usually encoded in the trnK tRNA gene intron. Probably assists in splicing its own and other chloroplast group II introns. This is Maturase K from Actinodium cunninghamii (Albany daisy).